We begin with the raw amino-acid sequence, 169 residues long: Oleosin Ara h 10.0101 (169 aa).

Helical transmembrane passes span Val-39–Ala-59 and Leu-73–Ala-93. Positions Lys-146 to Gly-156 are enriched in basic and acidic residues. Positions Lys-146–Thr-169 are disordered.

The protein belongs to the oleosin family. In terms of tissue distribution, expressed in seeds (at protein level).

The protein resides in the lipid droplet. It is found in the membrane. Functionally, may have a structural role to stabilize the lipid body during desiccation of the seed by preventing coalescence of the oil. Probably interacts with both lipid and phospholipid moieties of lipid bodies. May also provide recognition signals for specific lipase anchorage in lipolysis during seedling growth. This Arachis hypogaea (Peanut) protein is Oleosin Ara h 10.0101.